Reading from the N-terminus, the 337-residue chain is Fructose-1,6-bisphosphatase class 1 (337 aa).

Mg(2+)-binding residues include Glu-89, Asp-112, Leu-114, and Asp-115. Substrate-binding positions include 115–118 (DGSS), Asn-208, Tyr-241, and Lys-271. Glu-277 is a binding site for Mg(2+).

It belongs to the FBPase class 1 family. In terms of assembly, homotetramer. Mg(2+) serves as cofactor.

It localises to the cytoplasm. The enzyme catalyses beta-D-fructose 1,6-bisphosphate + H2O = beta-D-fructose 6-phosphate + phosphate. Its pathway is carbohydrate biosynthesis; gluconeogenesis. The polypeptide is Fructose-1,6-bisphosphatase class 1 (Yersinia enterocolitica serotype O:8 / biotype 1B (strain NCTC 13174 / 8081)).